The chain runs to 110 residues: Endoribonuclease SymE (110 aa).

The region spanning 29 to 74 (SRYPDYTRIPALTMKGQWLEAAGFATGTEVDVRVMNGCIVLTAQQP) is the SpoVT-AbrB domain.

This sequence belongs to the SymE family.

The protein localises to the cytoplasm. Involved in the degradation and recycling of damaged RNA. It is itself a target for degradation by the ATP-dependent protease Lon. The polypeptide is Endoribonuclease SymE (Salmonella heidelberg (strain SL476)).